The chain runs to 210 residues: Large ribosomal subunit protein bL25 (210 aa).

The disordered stretch occupies residues 190-210; sequence LKSEGAEGGEAEAGQAEEGEE. The segment covering 196–210 has biased composition (acidic residues); sequence EGGEAEAGQAEEGEE.

Belongs to the bacterial ribosomal protein bL25 family. CTC subfamily. Part of the 50S ribosomal subunit; part of the 5S rRNA/L5/L18/L25 subcomplex. Contacts the 5S rRNA. Binds to the 5S rRNA independently of L5 and L18.

This is one of the proteins that binds to the 5S RNA in the ribosome where it forms part of the central protuberance. This chain is Large ribosomal subunit protein bL25, found in Chelativorans sp. (strain BNC1).